A 273-amino-acid chain; its full sequence is Bis(5'-nucleosyl)-tetraphosphatase, symmetrical (273 aa).

It belongs to the Ap4A hydrolase family.

The enzyme catalyses P(1),P(4)-bis(5'-adenosyl) tetraphosphate + H2O = 2 ADP + 2 H(+). Functionally, hydrolyzes diadenosine 5',5'''-P1,P4-tetraphosphate to yield ADP. This chain is Bis(5'-nucleosyl)-tetraphosphatase, symmetrical, found in Aromatoleum aromaticum (strain DSM 19018 / LMG 30748 / EbN1) (Azoarcus sp. (strain EbN1)).